A 174-amino-acid chain; its full sequence is Crossover junction endodeoxyribonuclease RuvC (174 aa).

Catalysis depends on residues D8, E68, and D140. The Mg(2+) site is built by D8, E68, and D140.

This sequence belongs to the RuvC family. In terms of assembly, homodimer which binds Holliday junction (HJ) DNA. The HJ becomes 2-fold symmetrical on binding to RuvC with unstacked arms; it has a different conformation from HJ DNA in complex with RuvA. In the full resolvosome a probable DNA-RuvA(4)-RuvB(12)-RuvC(2) complex forms which resolves the HJ. It depends on Mg(2+) as a cofactor.

Its subcellular location is the cytoplasm. It catalyses the reaction Endonucleolytic cleavage at a junction such as a reciprocal single-stranded crossover between two homologous DNA duplexes (Holliday junction).. The RuvA-RuvB-RuvC complex processes Holliday junction (HJ) DNA during genetic recombination and DNA repair. Endonuclease that resolves HJ intermediates. Cleaves cruciform DNA by making single-stranded nicks across the HJ at symmetrical positions within the homologous arms, yielding a 5'-phosphate and a 3'-hydroxyl group; requires a central core of homology in the junction. The consensus cleavage sequence is 5'-(A/T)TT(C/G)-3'. Cleavage occurs on the 3'-side of the TT dinucleotide at the point of strand exchange. HJ branch migration catalyzed by RuvA-RuvB allows RuvC to scan DNA until it finds its consensus sequence, where it cleaves and resolves the cruciform DNA. The chain is Crossover junction endodeoxyribonuclease RuvC from Legionella pneumophila subsp. pneumophila (strain Philadelphia 1 / ATCC 33152 / DSM 7513).